Here is a 949-residue protein sequence, read N- to C-terminus: AP-1 complex subunit beta-1 (949 aa).

The residue at position 318 (K318) is an N6-acetyllysine. 3'-nitrotyrosine is present on Y574. Positions 584–625 (GGRGVVHKSLPPRTASSESAESPETAPTGAPPGEQPDVIPAQ) are disordered. Low complexity predominate over residues 594-611 (PPRTASSESAESPETAPT).

This sequence belongs to the adaptor complexes large subunit family. Adaptor protein complex 1 (AP-1) is a heterotetramer composed of two large adaptins (gamma-type subunit AP1G1 and beta-type subunit AP1B1), a medium adaptin (mu-type subunit AP1M1 or AP1M2) and a small adaptin (sigma-type subunit AP1S1 or AP1S2 or AP1S3). In terms of tissue distribution, widely expressed.

It localises to the golgi apparatus. The protein resides in the cytoplasmic vesicle. It is found in the clathrin-coated vesicle membrane. Functionally, subunit of clathrin-associated adaptor protein complex 1 that plays a role in protein sorting in the late-Golgi/trans-Golgi network (TGN) and/or endosomes. The AP complexes mediate both the recruitment of clathrin to membranes and the recognition of sorting signals within the cytosolic tails of transmembrane cargo molecules. This chain is AP-1 complex subunit beta-1 (AP1B1), found in Homo sapiens (Human).